Here is a 151-residue protein sequence, read N- to C-terminus: D-aminoacyl-tRNA deacylase (151 aa).

Residues 138–139 carry the Gly-cisPro motif, important for rejection of L-amino acids motif; that stretch reads GP.

Belongs to the DTD family. In terms of assembly, homodimer.

The protein localises to the cytoplasm. The catalysed reaction is glycyl-tRNA(Ala) + H2O = tRNA(Ala) + glycine + H(+). It catalyses the reaction a D-aminoacyl-tRNA + H2O = a tRNA + a D-alpha-amino acid + H(+). In terms of biological role, an aminoacyl-tRNA editing enzyme that deacylates mischarged D-aminoacyl-tRNAs. Also deacylates mischarged glycyl-tRNA(Ala), protecting cells against glycine mischarging by AlaRS. Acts via tRNA-based rather than protein-based catalysis; rejects L-amino acids rather than detecting D-amino acids in the active site. By recycling D-aminoacyl-tRNA to D-amino acids and free tRNA molecules, this enzyme counteracts the toxicity associated with the formation of D-aminoacyl-tRNA entities in vivo and helps enforce protein L-homochirality. This is D-aminoacyl-tRNA deacylase from Picosynechococcus sp. (strain ATCC 27264 / PCC 7002 / PR-6) (Agmenellum quadruplicatum).